Consider the following 211-residue polypeptide: Stromal cell-derived factor 2 (211 aa).

Positions 1 to 18 (MAVVSLLLFGGLWSAVGS) are cleaved as a signal peptide. 3 consecutive MIR domains span residues 21–75 (LAVV…IRGK), 83–138 (GTPI…VLCN), and 139–193 (GPYW…AMEG).

The protein resides in the secreted. The chain is Stromal cell-derived factor 2 (SDF2) from Bos taurus (Bovine).